Here is a 272-residue protein sequence, read N- to C-terminus: MKTIVLKLGGEIVHSPELDLVARDLRTLVDGWNRVAIVHGGGPQATALQKRLGLETRMVAGRRFTDEATLEVMKYVVAGRLNVDLCGRLLANGVMPVGLHGASGHAIQATRRPPRVMQGAGPEPVDLGLVGDVVGFNLPLLGDLFERRYVPVLACLGCDDAGQALNINGDTVASQLAGALRADALVLVTSTPGVLRDVKDPSSRIPRITRAEFERLVADGTISGGMIPKLEESFEVLRGGARSVVILGKLAPGDLEAAVLEPGSAGTVLVGE.

Substrate-binding positions include 41–42 (GG), R63, and N166.

The protein belongs to the acetylglutamate kinase family. ArgB subfamily.

Its subcellular location is the cytoplasm. It carries out the reaction N-acetyl-L-glutamate + ATP = N-acetyl-L-glutamyl 5-phosphate + ADP. The protein operates within amino-acid biosynthesis; L-arginine biosynthesis; N(2)-acetyl-L-ornithine from L-glutamate: step 2/4. Catalyzes the ATP-dependent phosphorylation of N-acetyl-L-glutamate. The chain is Acetylglutamate kinase from Anaeromyxobacter sp. (strain K).